The following is a 392-amino-acid chain: L-rhamnonate dehydratase (392 aa).

Residues histidine 22 and arginine 48 each coordinate substrate. Mg(2+)-binding residues include aspartate 214, glutamate 240, and glutamate 268. Histidine 318 functions as the Proton acceptor in the catalytic mechanism. Substrate is bound at residue glutamate 338.

Belongs to the mandelate racemase/muconate lactonizing enzyme family. RhamD subfamily. In terms of assembly, homooctamer; tetramer of dimers. Requires Mg(2+) as cofactor.

The enzyme catalyses L-rhamnonate = 2-dehydro-3-deoxy-L-rhamnonate + H2O. Its function is as follows. Catalyzes the dehydration of L-rhamnonate to 2-keto-3-deoxy-L-rhamnonate (KDR). The polypeptide is L-rhamnonate dehydratase (Burkholderia orbicola (strain MC0-3)).